Reading from the N-terminus, the 381-residue chain is Neuropeptide Y receptor type 2 (381 aa).

A disordered region spans residues 1–35; the sequence is MGPIGAEADENQTVEEMKVEQYGPQTTPRGELVPD. Topologically, residues 1-51 are extracellular; that stretch reads MGPIGAEADENQTVEEMKVEQYGPQTTPRGELVPDPEPELIDSTKLIEVQV. Asn11 is a glycosylation site (N-linked (GlcNAc...) asparagine). Residues 52–72 form a helical membrane-spanning segment; it reads VLILAYCSIILLGVIGNSLVI. The Cytoplasmic segment spans residues 73–86; that stretch reads HVVIKFKSMRTVTN. The chain crosses the membrane as a helical span at residues 87–107; it reads FFIANLAVADLLVNTLCLPFT. The Extracellular segment spans residues 108–124; the sequence is LTYTLMGEWKMGPVLCH. Cys123 and Cys203 form a disulfide bridge. The helical transmembrane segment at 125 to 145 threads the bilayer; the sequence is LVPYAQGLAVQVSTITLTVIA. Residues 146-165 lie on the Cytoplasmic side of the membrane; it reads LDRHRCIVYHLESKISKRIS. Residues 166-186 form a helical membrane-spanning segment; sequence FLIIGLAWGISALLASPLAIF. The Extracellular segment spans residues 187 to 216; it reads REYSLIEIIPDFEIVACTEKWPGEEKSIYG. The helical transmembrane segment at 217–237 threads the bilayer; the sequence is TVYSLSSLLILYVLPLGIISF. Over 238 to 268 the chain is Cytoplasmic; it reads SYTRIWSKLKNHVSPGAANDHYHQRRQKTTK. A helical membrane pass occupies residues 269 to 289; it reads MLVCVVVVFAVSWLPLHAFQL. At 290 to 304 the chain is on the extracellular side; sequence AVDIDSQVLDLKEYK. A helical membrane pass occupies residues 305–325; the sequence is LIFTVFHIIAMCSTFANPLLY. Over 326 to 381 the chain is Cytoplasmic; that stretch reads GWMNSNYRKAFLSAFRCEQRLDAIHSEVSVTFKAKKNLEVRKNSGPNDSFTEATNV. A lipid anchor (S-palmitoyl cysteine) is attached at Cys342.

This sequence belongs to the G-protein coupled receptor 1 family. In terms of tissue distribution, high levels in amygdala, corpus callosum, hippocampus and subthalamic nucleus. Also detectable in caudate nucleus, hypothalamus and substantia nigra.

It localises to the cell membrane. Receptor for neuropeptide Y and peptide YY. The rank order of affinity of this receptor for pancreatic polypeptides is PYY &gt; NPY &gt; PYY (3-36) &gt; NPY (2-36) &gt; [Ile-31, Gln-34] PP &gt; [Leu-31, Pro-34] NPY &gt; PP, [Pro-34] PYY and NPY free acid. This chain is Neuropeptide Y receptor type 2 (NPY2R), found in Homo sapiens (Human).